The following is a 936-amino-acid chain: Isoleucine--tRNA ligase (936 aa).

A 'HIGH' region motif is present at residues 58–68; the sequence is PYANGNIHIGH. Glu-560 provides a ligand contact to L-isoleucyl-5'-AMP. Positions 601–605 match the 'KMSKS' region motif; that stretch reads KMSKS. Residue Lys-604 participates in ATP binding. The Zn(2+) site is built by Cys-899, Cys-902, Cys-919, and Cys-922.

The protein belongs to the class-I aminoacyl-tRNA synthetase family. IleS type 1 subfamily. Monomer. The cofactor is Zn(2+).

Its subcellular location is the cytoplasm. It carries out the reaction tRNA(Ile) + L-isoleucine + ATP = L-isoleucyl-tRNA(Ile) + AMP + diphosphate. Its function is as follows. Catalyzes the attachment of isoleucine to tRNA(Ile). As IleRS can inadvertently accommodate and process structurally similar amino acids such as valine, to avoid such errors it has two additional distinct tRNA(Ile)-dependent editing activities. One activity is designated as 'pretransfer' editing and involves the hydrolysis of activated Val-AMP. The other activity is designated 'posttransfer' editing and involves deacylation of mischarged Val-tRNA(Ile). The chain is Isoleucine--tRNA ligase from Proteus mirabilis (strain HI4320).